The primary structure comprises 660 residues: DNA ligase (660 aa).

Residues 33–37 (DFVYD), 82–83 (SL), and E110 each bind NAD(+). K112 acts as the N6-AMP-lysine intermediate in catalysis. Residues R133, E167, K281, and K305 each contribute to the NAD(+) site. Zn(2+) contacts are provided by C396, C399, C412, and C417. The BRCT domain maps to 583 to 660 (DENRLLAGKK…SFEDIKSYLN (78 aa)).

This sequence belongs to the NAD-dependent DNA ligase family. LigA subfamily. Requires Mg(2+) as cofactor. Mn(2+) is required as a cofactor.

It carries out the reaction NAD(+) + (deoxyribonucleotide)n-3'-hydroxyl + 5'-phospho-(deoxyribonucleotide)m = (deoxyribonucleotide)n+m + AMP + beta-nicotinamide D-nucleotide.. Functionally, DNA ligase that catalyzes the formation of phosphodiester linkages between 5'-phosphoryl and 3'-hydroxyl groups in double-stranded DNA using NAD as a coenzyme and as the energy source for the reaction. It is essential for DNA replication and repair of damaged DNA. This chain is DNA ligase, found in Borrelia garinii subsp. bavariensis (strain ATCC BAA-2496 / DSM 23469 / PBi) (Borreliella bavariensis).